A 282-amino-acid chain; its full sequence is Ribonuclease P protein subunit p38 (282 aa).

Disordered regions lie at residues 1 to 21 (MAAAPQAPGRGSVRKTRPLPV) and 61 to 103 (EDRK…QASG). Ala-2 is subject to N-acetylalanine. Ser-12 is modified (phosphoserine). Residues 88–97 (EDLKKEKPKG) show a composition bias toward basic and acidic residues. Phosphoserine occurs at positions 226 and 235. Residues 262-282 (KLIPNPNKIRKPPKSKRTASK) are disordered. Positions 269–282 (KIRKPPKSKRTASK) are enriched in basic residues.

Belongs to the eukaryotic ribosomal protein eL8 family. In terms of assembly, component of nuclear RNase P and RNase MRP ribonucleoproteins. RNase P consists of a catalytic RNA moiety and about 10 protein subunits; POP1, POP4, POP5, POP7, RPP14, RPP21, RPP25, RPP30, RPP38 and RPP40. Within the RNase P complex, POP1, POP7 and RPP25 form the 'finger' subcomplex, POP5, RPP14, RPP40 and homodimeric RPP30 form the 'palm' subcomplex, and RPP21, POP4 and RPP38 form the 'wrist' subcomplex. All subunits of the RNase P complex interact with the catalytic RNA. Several subunits of RNase P are also part of the RNase MRP complex. RNase MRP consists of a catalytic RNA moiety and about 8 protein subunits; POP1, POP7, RPP25, RPP30, RPP38, RPP40 and possibly also POP4 and POP5.

Its subcellular location is the nucleus. It is found in the nucleolus. Functionally, component of ribonuclease P, a ribonucleoprotein complex that generates mature tRNA molecules by cleaving their 5'-ends. Also a component of the MRP ribonuclease complex, which cleaves pre-rRNA sequences. This is Ribonuclease P protein subunit p38 (RPP38) from Bos taurus (Bovine).